A 303-amino-acid polypeptide reads, in one-letter code: GPN-loop GTPase 2 (303 aa).

29–34 provides a ligand contact to GTP; sequence GSGKST. A Gly-Pro-Asn (GPN)-loop; involved in dimer interface motif is present at residues 85 to 87; that stretch reads GPN. 187–190 serves as a coordination point for GTP; that stretch reads SKMD.

It belongs to the GPN-loop GTPase family. As to quaternary structure, heterodimers with gpn1 or gpn3. Binds to RNA polymerase II (RNAPII).

Small GTPase required for proper localization of RNA polymerase II and III (RNAPII and RNAPIII). May act at an RNAP assembly step prior to nuclear import. This chain is GPN-loop GTPase 2, found in Xenopus tropicalis (Western clawed frog).